A 231-amino-acid polypeptide reads, in one-letter code: Somatolactin-1 (231 aa).

A signal peptide spans Met-1–Ser-24. Disulfide bonds link Cys-29/Cys-39, Cys-89/Cys-205, and Cys-222/Cys-230. The N-linked (GlcNAc...) asparagine glycan is linked to Asn-145.

It belongs to the somatotropin/prolactin family. Pituitary gland.

It localises to the secreted. This chain is Somatolactin-1, found in Sparus aurata (Gilthead sea bream).